We begin with the raw amino-acid sequence, 209 residues long: Flavin prenyltransferase UbiX (209 aa).

FMN-binding positions include glycine 13 to serine 15, serine 39, serine 104 to threonine 107, cysteine 116, and arginine 139. 2 residues coordinate dimethylallyl phosphate: tyrosine 169 and arginine 185.

The protein belongs to the UbiX/PAD1 family.

The catalysed reaction is dimethylallyl phosphate + FMNH2 = prenylated FMNH2 + phosphate. Functionally, flavin prenyltransferase that catalyzes the synthesis of the prenylated FMN cofactor (prenyl-FMN) for 4-hydroxy-3-polyprenylbenzoic acid decarboxylase UbiD. The prenyltransferase is metal-independent and links a dimethylallyl moiety from dimethylallyl monophosphate (DMAP) to the flavin N5 and C6 atoms of FMN. This Pseudomonas aeruginosa (strain ATCC 15692 / DSM 22644 / CIP 104116 / JCM 14847 / LMG 12228 / 1C / PRS 101 / PAO1) protein is Flavin prenyltransferase UbiX.